The chain runs to 195 residues: Cysteine/O-acetylserine efflux protein (195 aa).

A run of 5 helical transmembrane segments spans residues 47-67 (SLGF…LAVI), 70-90 (AAVH…AWKI), 105-125 (ISFW…LYGV), 142-162 (VVGV…CWAL), and 177-194 (QLNI…VRIF).

This sequence belongs to the Rht family.

The protein localises to the cell inner membrane. It carries out the reaction O-acetyl-L-serine(in) = O-acetyl-L-serine(out). The catalysed reaction is L-cysteine(in) = L-cysteine(out). Its function is as follows. Exporter of O-acetylserine (OAS) and cysteine. The chain is Cysteine/O-acetylserine efflux protein (eamB) from Shigella boydii serotype 4 (strain Sb227).